The chain runs to 122 residues: UPF0102 protein BQ09720 (122 aa).

It belongs to the UPF0102 family.

This Bartonella quintana (strain Toulouse) (Rochalimaea quintana) protein is UPF0102 protein BQ09720.